Reading from the N-terminus, the 520-residue chain is 2-isopropylmalate synthase (520 aa).

One can recognise a Pyruvate carboxyltransferase domain in the interval 12–274 (VVIFDTTLRD…DTGIDTTMLT (263 aa)). The Mn(2+) site is built by aspartate 21, histidine 209, histidine 211, and asparagine 245. Positions 398-520 (KLLSLSVIAG…RLHAQHAAVV (123 aa)) are regulatory domain.

Belongs to the alpha-IPM synthase/homocitrate synthase family. LeuA type 1 subfamily. In terms of assembly, homodimer. Mn(2+) is required as a cofactor.

It is found in the cytoplasm. The enzyme catalyses 3-methyl-2-oxobutanoate + acetyl-CoA + H2O = (2S)-2-isopropylmalate + CoA + H(+). It functions in the pathway amino-acid biosynthesis; L-leucine biosynthesis; L-leucine from 3-methyl-2-oxobutanoate: step 1/4. Catalyzes the condensation of the acetyl group of acetyl-CoA with 3-methyl-2-oxobutanoate (2-ketoisovalerate) to form 3-carboxy-3-hydroxy-4-methylpentanoate (2-isopropylmalate). The protein is 2-isopropylmalate synthase of Methylorubrum populi (strain ATCC BAA-705 / NCIMB 13946 / BJ001) (Methylobacterium populi).